The primary structure comprises 276 residues: Omega-amidase NIT2 (276 aa).

Positions 4–248 (FRLALIQLQV…ETILYSDIDL (245 aa)) constitute a CN hydrolase domain. Ser26 carries the phosphoserine modification. Glu43 (proton acceptor) is an active-site residue. N6-acetyllysine; alternate is present on Lys68. Lys68 carries the post-translational modification N6-succinyllysine; alternate. Lys112 functions as the Proton donor in the catalytic mechanism. An N6-succinyllysine mark is found at Lys123 and Lys130. Catalysis depends on Cys153, which acts as the Nucleophile.

It belongs to the carbon-nitrogen hydrolase superfamily. NIT1/NIT2 family. Homodimer.

The protein localises to the cytoplasm. It carries out the reaction a monoamide of a dicarboxylate + H2O = a dicarboxylate + NH4(+). It catalyses the reaction 2-oxoglutaramate + H2O = 2-oxoglutarate + NH4(+). The catalysed reaction is 2-oxosuccinamate + H2O = oxaloacetate + NH4(+). In terms of biological role, has omega-amidase activity. The role of omega-amidase is to remove potentially toxic intermediates by converting 2-oxoglutaramate and 2-oxosuccinamate to biologically useful 2-oxoglutarate and oxaloacetate, respectively. Can also hydrolyze gamma-monomethyl-alpha-ketoglutarate in vitro. This Mus musculus (Mouse) protein is Omega-amidase NIT2.